Here is a 175-residue protein sequence, read N- to C-terminus: Transcriptional activatory protein BadR (175 aa).

Positions 20–156 (ANRLFFRLYQ…TLHYLLKILD (137 aa)) constitute an HTH marR-type domain.

In terms of biological role, transcriptional activator of genes for the anaerobic degradation of benzoate. The polypeptide is Transcriptional activatory protein BadR (badR) (Rhodopseudomonas palustris (strain ATCC BAA-98 / CGA009)).